We begin with the raw amino-acid sequence, 37 residues long: Turripeptide Lol6.2 (37 aa).

3 disulfide bridges follow: Cys-4-Cys-16, Cys-8-Cys-21, and Cys-15-Cys-29.

As to expression, expressed by the venom duct.

Its subcellular location is the secreted. Its function is as follows. Acts as a neurotoxin by inhibiting an ion channel. The sequence is that of Turripeptide Lol6.2 from Iotyrris olangoensis (Sea snail).